The following is an 842-amino-acid chain: Elongation factor 2 (842 aa).

In terms of domain architecture, tr-type G spans 17 to 346 (TNVRNMSVIA…MIVLHLPSPV (330 aa)). GTP is bound by residues 26–33 (AHVDHGKS), 158–161 (NKVD), and 213–215 (SGL). His699 is subject to Diphthamide.

The protein belongs to the TRAFAC class translation factor GTPase superfamily. Classic translation factor GTPase family. EF-G/EF-2 subfamily.

It localises to the cytoplasm. It catalyses the reaction GTP + H2O = GDP + phosphate + H(+). Catalyzes the GTP-dependent ribosomal translocation step during translation elongation. During this step, the ribosome changes from the pre-translocational (PRE) to the post-translocational (POST) state as the newly formed A-site-bound peptidyl-tRNA and P-site-bound deacylated tRNA move to the P and E sites, respectively. Catalyzes the coordinated movement of the two tRNA molecules, the mRNA and conformational changes in the ribosome. The protein is Elongation factor 2 (EFT2) of Candida albicans (strain SC5314 / ATCC MYA-2876) (Yeast).